Consider the following 616-residue polypeptide: Chaperone protein HscA homolog (616 aa).

The protein belongs to the heat shock protein 70 family.

Its function is as follows. Chaperone involved in the maturation of iron-sulfur cluster-containing proteins. Has a low intrinsic ATPase activity which is markedly stimulated by HscB. The chain is Chaperone protein HscA homolog from Histophilus somni (strain 2336) (Haemophilus somnus).